The sequence spans 27 residues: Small ribosomal subunit protein bTHX (27 aa).

Residues 1 to 13 are compositionally biased toward basic residues; it reads MGKGDRRTRRGKI. A disordered region spans residues 1–27; sequence MGKGDRRTRRGKIWRGTYGKYRPRKKK.

This sequence belongs to the bacterial ribosomal protein bTHX family. Part of the 30S ribosomal subunit.

In terms of biological role, binds at the top of the head of the 30S subunit. It stabilizes a number of different RNA elements and thus is important for subunit structure. The polypeptide is Small ribosomal subunit protein bTHX (rpsU) (Thermus aquaticus).